A 69-amino-acid polypeptide reads, in one-letter code: Disintegrin EMF10A (69 aa).

Residues 1-66 enclose the Disintegrin domain; it reads MNSANPCCDP…DCPRNPWKSE (66 aa). Disulfide bonds link cysteine 7–cysteine 30, cysteine 21–cysteine 27, cysteine 26–cysteine 51, and cysteine 39–cysteine 58. The short motif at 43–45 is the Cell attachment site element; that stretch reads RGD.

The protein belongs to the disintegrin family. Dimeric disintegrin subfamily. As to quaternary structure, heterodimer with EMF10B; disulfide-linked. Expressed by the venom gland.

It localises to the secreted. Its function is as follows. Extremely potent and selective inhibitor of integrin alpha-5/beta-1 (ITGA5/ITGB1). Partially inhibits adhesion of cells expressing alpha-IIb/beta-3 (ITGA2B/ITGB3), alpha-V/beta-3 (ITGAV/ITGB3), and alpha-4/beta-1 (ITGA4/ITGB1) to appropriate ligands only at concentration higher than 500 nM. Weakly inhibits ADP-induced platelet aggregation. In Eristicophis macmahoni (Leaf-nosed viper), this protein is Disintegrin EMF10A.